Consider the following 451-residue polypeptide: UDP-N-acetylmuramate--L-alanine ligase (451 aa).

Residue 110–116 (GTHGKTT) participates in ATP binding.

This sequence belongs to the MurCDEF family.

It localises to the cytoplasm. It catalyses the reaction UDP-N-acetyl-alpha-D-muramate + L-alanine + ATP = UDP-N-acetyl-alpha-D-muramoyl-L-alanine + ADP + phosphate + H(+). The protein operates within cell wall biogenesis; peptidoglycan biosynthesis. In terms of biological role, cell wall formation. The sequence is that of UDP-N-acetylmuramate--L-alanine ligase from Francisella tularensis subsp. tularensis (strain SCHU S4 / Schu 4).